Here is a 270-residue protein sequence, read N- to C-terminus: MANTRAISSGAKPVMVLKVGGALLQCEMGMARLMEAAAKIIANGQPIIMVHGGGCLVDEQLKANGMTTKKLDGLRVTPQEQIPVIVGALAGTSNKTLQAAAIKAGVTSLGMSLADAGMMSAKVKDPQLGLVGEVEPKDASYLEFVLSKGWMPIVSSIAISEQGEMLNVNADQAATALAKLVSGSLVLLSDVSGVLDGKGQLISSLNRAQVNELTKIGVIEKGMKVKVEAALDVAESMGQAVQIASWRHAQQLIALSRGETVGTQIQPQIQ.

Residues 53–54, R75, and N167 contribute to the substrate site; that span reads GG.

This sequence belongs to the acetylglutamate kinase family. ArgB subfamily.

It localises to the cytoplasm. The enzyme catalyses N-acetyl-L-glutamate + ATP = N-acetyl-L-glutamyl 5-phosphate + ADP. It participates in amino-acid biosynthesis; L-arginine biosynthesis; N(2)-acetyl-L-ornithine from L-glutamate: step 2/4. Functionally, catalyzes the ATP-dependent phosphorylation of N-acetyl-L-glutamate. This Shewanella halifaxensis (strain HAW-EB4) protein is Acetylglutamate kinase.